The sequence spans 959 residues: MEPPLELPTQRKRVIPSKFGILKRNAEIEAEKNRENLQQSSCFSHINEIGKEIGLEIWKIIDDSTIQKVPKVNHSTFETNKSYLLLMGQFYDGNMNIKTYNIHFWIGELLINSQETINFCNDRIEELERIIKYNQKQFDSEQFYPEPILYREFQGKEGDIFMSYFKSYGGPRYVAPLKLTSASAAIATAAKQYKLFHLKGRRNIRVKQVDISSKSLNSGDVFVLDCEDFIYQWNGSESSRLEKGKGLDLTIRLRDEKSAKAKIIVMDENDTDKDHPEFWKRLGGCKDDVQKAEQGGDDFAYEKKSVEQIKLYQVENLNYEVHLHLIDPIGDVYSTTQLNAEFCYILDCETELYVWLGKASANDQRTVAMANAMDLLHEDNRPSWTPIIKMTQGSENTLFKDKFKKGSWGEYVNDNFEKKPITGKGVAAKAVQEKINVDALHNPEKYQLSKEERKSTIPTLHHVDDKHRGELKIWHVRNRNKFEISQSEFGLFYNQSCYLVLFTLFAADGSNNSILYYWQGRFSSSEDKGAAALLAKDVGKELHRSCIHVRTVQNKEPNHFLEHFQGRMVVFKGSRPNATTEVSLENLSSSLQGLYHVRGTEPINIHSIQVEKAISSLDSNDSFILVNFKNTISYIWVGKYSDEKEAALQISSNVFTGYNFQLIDEGDETSEFWESLETNSSLSLLKDYYTQLRTVEQEKKTRLFQCSNNSGVFKVFEIHDFSQDDLDSDDVMILDNQKQIFVWVGKESSDTEKLMANETALEYIMNAPTHRRDDPIFTIQDGFEPHEFTFNFHAWQVNKTQQDSYKSKLSAILGSNNSGPASPIMLPTSGVTLKPTTAATPKPITTPTVTTPKPITTPTVATLKTVTPAVTLKPTTVTTPSKVATTTNTSTPSPTTITTFYPLSVLKQKTNLPNDIDKSCLHLYLSDEEFLSTFKMTKEIFQKTPAWKTKQLRVDNGLF.

The interval 1–53 (MEPPLELPTQRKRVIPSKFGILKRNAEIEAEKNRENLQQSSCFSHINEIGKEI) is tail. The segment at 54–832 (GLEIWKIIDD…PIMLPTSGVT (779 aa)) is core. Gelsolin-like repeat units lie at residues 64 to 116 (STIQ…SQET), 204 to 244 (IRVK…LEKG), 309 to 366 (IKLY…DQRT), 479 to 529 (RNKF…EDKG), 603 to 647 (INIH…KEAA), and 713 to 754 (FKVF…TEKL). Tandem repeats lie at residues 840-849 (TPKPITTPTV) and 851-860 (TPKPITTPTV). The interval 840-860 (TPKPITTPTVTTPKPITTPTV) is 2 X 10 AA repeats of T-P-K-P-I-T-T-P-T-V. Positions 895–959 (TTITTFYPLS…KQLRVDNGLF (65 aa)) constitute an HP domain.

The protein belongs to the villin/gelsolin family.

Its subcellular location is the cytoplasm. The protein resides in the cytoskeleton. In terms of biological role, caps actin filaments but displays neither severing nor cross-linking nor nucleating activities. Protovillin seems to be a villin precursor with only archaic capping activity. It lacks essential changes in the sequence to allow bundling of actin filaments and consequently the appearance of microvilli. This chain is Protovillin (vilB), found in Dictyostelium discoideum (Social amoeba).